Consider the following 758-residue polypeptide: Protein hunchback (758 aa).

2 disordered regions span residues 30–51 (EPGH…PIPS) and 172–214 (EKLQ…EDMK). The span at 39–51 (SVASSPRQSPIPS) shows a compositional bias: polar residues. Thr-178 carries the phosphothreonine modification. Residues Ser-188, Ser-207, Ser-209, and Ser-210 each carry the phosphoserine modification. A compositionally biased stretch (basic and acidic residues) spans 198 to 214 (EPEKEHDQMSNSSEDMK). 4 C2H2-type zinc fingers span residues 240–262 (YKCK…TRTH), 269–291 (LQCP…IRKH), 297–319 (FQCD…RKSH), and 325–349 (YRCA…KYGH). 2 disordered regions span residues 365 to 416 (LVID…PVAT) and 513 to 536 (QLQQ…YERK). Composition is skewed to low complexity over residues 398–415 (VAAV…QPVA) and 513–522 (QLQQQNQQQS). A compositionally biased stretch (acidic residues) spans 523–532 (DNEEEEQDDE). Residues Ser-537 and Ser-540 each carry the phosphoserine modification. Positions 603–695 (MTSPEQLKVP…TTSAVAAPPS (93 aa)) are disordered. Residues 652-695 (ANTSASSTASSSGNSSNASSNSNGNSSSNSSSNGTTSAVAAPPS) show a composition bias toward low complexity. 2 consecutive C2H2-type zinc fingers follow at residues 705–727 (YECK…MGYH) and 733–757 (FKCN…RNAH).

Belongs to the hunchback C2H2-type zinc-finger protein family. In terms of tissue distribution, in embryo, expression of maternal transcript is highest in anterior region. Zygotic transcript is expressed in anterior region until the beginning of gastrulation and in posterior region until early gastrulation. After this, it is expressed in developing nervous system.

It localises to the nucleus. In terms of biological role, gap class segmentation protein that controls development of head structures. In Drosophila melanogaster (Fruit fly), this protein is Protein hunchback.